The following is a 402-amino-acid chain: UDP-N-acetylmuramoylalanine--D-glutamate ligase (402 aa).

An ATP-binding site is contributed by 97–103; sequence GTNGKTT.

This sequence belongs to the MurCDEF family.

Its subcellular location is the cytoplasm. The catalysed reaction is UDP-N-acetyl-alpha-D-muramoyl-L-alanine + D-glutamate + ATP = UDP-N-acetyl-alpha-D-muramoyl-L-alanyl-D-glutamate + ADP + phosphate + H(+). It functions in the pathway cell wall biogenesis; peptidoglycan biosynthesis. Its function is as follows. Cell wall formation. Catalyzes the addition of glutamate to the nucleotide precursor UDP-N-acetylmuramoyl-L-alanine (UMA). In Campylobacter jejuni (strain RM1221), this protein is UDP-N-acetylmuramoylalanine--D-glutamate ligase.